Consider the following 502-residue polypeptide: ATP synthase subunit alpha (502 aa).

Residue 169-176 (GDRQTGKT) participates in ATP binding.

It belongs to the ATPase alpha/beta chains family. In terms of assembly, F-type ATPases have 2 components, CF(1) - the catalytic core - and CF(0) - the membrane proton channel. CF(1) has five subunits: alpha(3), beta(3), gamma(1), delta(1), epsilon(1). CF(0) has three main subunits: a(1), b(2) and c(9-12). The alpha and beta chains form an alternating ring which encloses part of the gamma chain. CF(1) is attached to CF(0) by a central stalk formed by the gamma and epsilon chains, while a peripheral stalk is formed by the delta and b chains.

The protein resides in the cell inner membrane. The enzyme catalyses ATP + H2O + 4 H(+)(in) = ADP + phosphate + 5 H(+)(out). In terms of biological role, produces ATP from ADP in the presence of a proton gradient across the membrane. The alpha chain is a regulatory subunit. This Trichlorobacter lovleyi (strain ATCC BAA-1151 / DSM 17278 / SZ) (Geobacter lovleyi) protein is ATP synthase subunit alpha.